Reading from the N-terminus, the 306-residue chain is Curved DNA-binding protein (306 aa).

The J domain occupies 5 to 69 (DYYAIMGVKP…QRRAEYDQMW (65 aa)).

The protein localises to the cytoplasm. Its subcellular location is the nucleoid. In terms of biological role, DNA-binding protein that preferentially recognizes a curved DNA sequence. It is probably a functional analog of DnaJ; displays overlapping activities with DnaJ, but functions under different conditions, probably acting as a molecular chaperone in an adaptive response to environmental stresses other than heat shock. Lacks autonomous chaperone activity; binds native substrates and targets them for recognition by DnaK. Its activity is inhibited by the binding of CbpM. This chain is Curved DNA-binding protein, found in Escherichia coli O8 (strain IAI1).